Consider the following 315-residue polypeptide: MANPWWTGQVNLSGLETTPPGSSQLKKPDLHISMNMAMDSGHNNHHHHQEVDNNNNDDDRDNLSGDDHEPREGAVEAPTRRPRGRPAGSKNKPKPPIFVTRDSPNALKSHVMEIASGTDVIETLATFARRRQRGICILSGNGTVANVTLRQPSTAAVAAAPGGAAVLALQGRFEILSLTGSFLPGPAPPGSTGLTIYLAGGQGQVVGGSVVGPLMAAGPVMLIAATFSNATYERLPLEEEEAAERGGGGGSGGVVPGQLGGGGSPLSSGAGGGDGNQGLPVYNMPGNLVSNGGSGGGGQMSGQEAYGWAQARSGF.

The span at Met1–Leu25 shows a compositional bias: polar residues. 2 disordered regions span residues Met1 to Pro104 and Glu239 to Pro285. Basic and acidic residues predominate over residues Asp61 to Ala74. The a.T hook DNA-binding region spans Arg80–Lys92. The PPC domain maps to Pro104–Gly248. Residues Arg245–Asn276 show a composition bias toward gly residues.

As to expression, slightly expressed in roots.

It is found in the nucleus. Transcription factor that specifically binds AT-rich DNA sequences related to the nuclear matrix attachment regions (MARs). Negatively regulates plant innate immunity (PTI) to pathogens through the down-regulation of the PAMP-triggered FRK1 expression. Positively regulates defense against fungal Verticillium infection. The protein is AT-hook motif nuclear-localized protein 19 of Arabidopsis thaliana (Mouse-ear cress).